The following is a 379-amino-acid chain: Chaperone protein DnaJ 2 (379 aa).

A J domain is found at aspartate 4 to glycine 68. The CR-type zinc finger occupies glycine 130–arginine 212. The Zn(2+) site is built by cysteine 143, cysteine 146, cysteine 160, cysteine 163, cysteine 186, cysteine 189, cysteine 200, and cysteine 203. CXXCXGXG motif repeat units lie at residues cysteine 143–glycine 150, cysteine 160–glycine 167, cysteine 186–alanine 193, and cysteine 200–glycine 207. Residues arginine 351–serine 379 form a disordered region. The span at glycine 358–leucine 367 shows a compositional bias: polar residues. Positions arginine 370–serine 379 are enriched in basic and acidic residues.

Belongs to the DnaJ family. In terms of assembly, homodimer. It depends on Zn(2+) as a cofactor.

It is found in the cytoplasm. Functionally, participates actively in the response to hyperosmotic and heat shock by preventing the aggregation of stress-denatured proteins and by disaggregating proteins, also in an autonomous, DnaK-independent fashion. Unfolded proteins bind initially to DnaJ; upon interaction with the DnaJ-bound protein, DnaK hydrolyzes its bound ATP, resulting in the formation of a stable complex. GrpE releases ADP from DnaK; ATP binding to DnaK triggers the release of the substrate protein, thus completing the reaction cycle. Several rounds of ATP-dependent interactions between DnaJ, DnaK and GrpE are required for fully efficient folding. Also involved, together with DnaK and GrpE, in the DNA replication of plasmids through activation of initiation proteins. The chain is Chaperone protein DnaJ 2 from Streptomyces albus G.